The following is a 359-amino-acid chain: Dihydroorotate dehydrogenase (quinone) (359 aa).

FMN-binding positions include 61-65 (AGYDK) and Thr85. Residue Lys65 participates in substrate binding. 110-114 (NRLGF) serves as a coordination point for substrate. The FMN site is built by Asn139 and Asn170. Residue Asn170 participates in substrate binding. The Nucleophile role is filled by Ser173. Asn175 provides a ligand contact to substrate. FMN contacts are provided by Lys211 and Ser239. 240-241 (NT) is a substrate binding site. FMN is bound by residues Gly262, Gly291, and 312–313 (YT).

Belongs to the dihydroorotate dehydrogenase family. Type 2 subfamily. As to quaternary structure, monomer. Requires FMN as cofactor.

It localises to the cell membrane. It carries out the reaction (S)-dihydroorotate + a quinone = orotate + a quinol. The protein operates within pyrimidine metabolism; UMP biosynthesis via de novo pathway; orotate from (S)-dihydroorotate (quinone route): step 1/1. Its function is as follows. Catalyzes the conversion of dihydroorotate to orotate with quinone as electron acceptor. The sequence is that of Dihydroorotate dehydrogenase (quinone) from Mesorhizobium japonicum (strain LMG 29417 / CECT 9101 / MAFF 303099) (Mesorhizobium loti (strain MAFF 303099)).